The primary structure comprises 900 residues: Alanine--tRNA ligase (900 aa).

Zn(2+) contacts are provided by H580, H584, C683, and H687.

It belongs to the class-II aminoacyl-tRNA synthetase family. It depends on Zn(2+) as a cofactor.

It is found in the cytoplasm. It carries out the reaction tRNA(Ala) + L-alanine + ATP = L-alanyl-tRNA(Ala) + AMP + diphosphate. In terms of biological role, catalyzes the attachment of alanine to tRNA(Ala) in a two-step reaction: alanine is first activated by ATP to form Ala-AMP and then transferred to the acceptor end of tRNA(Ala). Also edits incorrectly charged Ser-tRNA(Ala) and Gly-tRNA(Ala) via its editing domain. In Mycolicibacterium paratuberculosis (strain ATCC BAA-968 / K-10) (Mycobacterium paratuberculosis), this protein is Alanine--tRNA ligase.